Reading from the N-terminus, the 515-residue chain is Maturase K (515 aa).

This sequence belongs to the intron maturase 2 family. MatK subfamily.

The protein localises to the plastid. Its subcellular location is the chloroplast. In terms of biological role, usually encoded in the trnK tRNA gene intron. Probably assists in splicing its own and other chloroplast group II introns. This Trillium pusillum (Dwarf wakerobin) protein is Maturase K.